The sequence spans 157 residues: Small ribosomal subunit protein uS7 (157 aa).

The protein belongs to the universal ribosomal protein uS7 family. As to quaternary structure, part of the 30S ribosomal subunit. Contacts proteins S9 and S11.

Functionally, one of the primary rRNA binding proteins, it binds directly to 16S rRNA where it nucleates assembly of the head domain of the 30S subunit. Is located at the subunit interface close to the decoding center, probably blocks exit of the E-site tRNA. The polypeptide is Small ribosomal subunit protein uS7 (Desulfotalea psychrophila (strain LSv54 / DSM 12343)).